The chain runs to 124 residues: Holo-[acyl-carrier-protein] synthase (124 aa).

Residues aspartate 7 and glutamate 55 each coordinate Mg(2+).

This sequence belongs to the P-Pant transferase superfamily. AcpS family. Mg(2+) is required as a cofactor.

It localises to the cytoplasm. The catalysed reaction is apo-[ACP] + CoA = holo-[ACP] + adenosine 3',5'-bisphosphate + H(+). In terms of biological role, transfers the 4'-phosphopantetheine moiety from coenzyme A to a Ser of acyl-carrier-protein. The polypeptide is Holo-[acyl-carrier-protein] synthase (Borreliella burgdorferi (strain ATCC 35210 / DSM 4680 / CIP 102532 / B31) (Borrelia burgdorferi)).